The following is a 229-amino-acid chain: MAKLVFIRHGQSEWNLSNQFTGWVDVNLSEEGVRQAQNAGALLKKEGILFDQAYTSVLTRAIKTLHYALEGSDQLWIPETKSWRLNERHYGALQGQNKAEAAEKWGDEQVHIWRRSYDTLPPLLDASDEGSAANDRRYAHLDPKAIPGGENLKVTLERVIPFWEDEIAPKLIDGQNIIVAAHGNSLRALTKYIENISDEDIMDVEMATGEPVVYDLDENLNVVSKKKLN.

Substrate-binding positions include 8-15 (RHGQSEWN), 21-22 (TG), Arg60, 87-90 (ERHY), Lys98, 114-115 (RR), and 183-184 (GN). The active-site Tele-phosphohistidine intermediate is the His9. Glu87 acts as the Proton donor/acceptor in catalysis.

The protein belongs to the phosphoglycerate mutase family. BPG-dependent PGAM subfamily.

It carries out the reaction (2R)-2-phosphoglycerate = (2R)-3-phosphoglycerate. Its pathway is carbohydrate degradation; glycolysis; pyruvate from D-glyceraldehyde 3-phosphate: step 3/5. Its function is as follows. Catalyzes the interconversion of 2-phosphoglycerate and 3-phosphoglycerate. The sequence is that of 2,3-bisphosphoglycerate-dependent phosphoglycerate mutase 2 from Latilactobacillus sakei subsp. sakei (strain 23K) (Lactobacillus sakei subsp. sakei).